Here is a 966-residue protein sequence, read N- to C-terminus: Catenin alpha-2 (966 aa).

Residues 924 to 940 show a composition bias toward basic and acidic residues; sequence PEKKPLVKREKPEEYQT. Residues 924-952 form a disordered region; that stretch reads PEKKPLVKREKPEEYQTRVRRGSQKKHIS. A compositionally biased stretch (basic residues) spans 941-951; the sequence is RVRRGSQKKHI.

It belongs to the vinculin/alpha-catenin family.

The protein resides in the cell membrane. It is found in the cytoplasm. Its subcellular location is the cytoskeleton. The protein localises to the cell junction. It localises to the adherens junction. The protein resides in the cell projection. It is found in the axon. Its subcellular location is the nucleus. May function as a linker between cadherin adhesion receptors and the cytoskeleton to regulate cell-cell adhesion and differentiation in the nervous system. The chain is Catenin alpha-2 (ctnna2) from Xenopus tropicalis (Western clawed frog).